Consider the following 481-residue polypeptide: UDP-N-acetylmuramate--L-alanine ligase (481 aa).

126–132 (GTHGKTT) is an ATP binding site.

It belongs to the MurCDEF family.

It localises to the cytoplasm. It catalyses the reaction UDP-N-acetyl-alpha-D-muramate + L-alanine + ATP = UDP-N-acetyl-alpha-D-muramoyl-L-alanine + ADP + phosphate + H(+). Its pathway is cell wall biogenesis; peptidoglycan biosynthesis. In terms of biological role, cell wall formation. This Marinobacter nauticus (strain ATCC 700491 / DSM 11845 / VT8) (Marinobacter aquaeolei) protein is UDP-N-acetylmuramate--L-alanine ligase.